The primary structure comprises 182 residues: Large ribosomal subunit protein uL6 (182 aa).

It belongs to the universal ribosomal protein uL6 family. In terms of assembly, part of the 50S ribosomal subunit.

Its function is as follows. This protein binds to the 23S rRNA, and is important in its secondary structure. It is located near the subunit interface in the base of the L7/L12 stalk, and near the tRNA binding site of the peptidyltransferase center. This is Large ribosomal subunit protein uL6 from Methanococcus maripaludis (strain C7 / ATCC BAA-1331).